Consider the following 790-residue polypeptide: IQ motif and ubiquitin-like domain-containing protein (790 aa).

The span at M1–T17 shows a compositional bias: polar residues. The tract at residues M1 to E49 is disordered. Positions A130–P206 constitute a Ubiquitin-like domain. The region spanning R337–L366 is the IQ domain.

Component of the axonemal radial spoke 1 (RS1) complex, at least composed of spoke head proteins RSPH1, RSPH3, RSPH9 and the cilia-specific component RSPH4A or sperm-specific component RSPH6A, spoke stalk proteins RSPH14, DNAJB13, DYDC1, ROPN1L and NME5, and the anchor protein IQUB. Does not appear to be part of radial spoke complexes 2 or 3 (RS2 or RS3). Interacts with CALM1. Interacts with DNAJB13. Interacts with DYNLL2. Interacts with NME5. Interacts with RSPH3. Interacts with RSPH9. Interacts with ZMYND10. Interacts with calmodulin; the interaction occurs in conditions of low but not high calcium.

Its subcellular location is the cytoplasm. It is found in the cytoskeleton. The protein localises to the flagellum axoneme. The protein resides in the cell projection. It localises to the cilium. Functionally, adapter protein that anchors the radial spoke 1 (RS1) complex to the A microtubule of outer doublet microtubules in axonemes. The triple radial spokes (RS1, RS2 and RS3) are required to modulate beating of the sperm flagellum. May play a role in inhibiting signaling via MAPK1/ERK2 and MAPK3/ERK1. Additionally, may play a role in the functioning of cilia. Not required for the functioning of tracheal or ependymal cilia. In Macaca fascicularis (Crab-eating macaque), this protein is IQ motif and ubiquitin-like domain-containing protein (IQUB).